Here is a 662-residue protein sequence, read N- to C-terminus: MINHITDNQFKLVSKYQPSGDQPQAIEQLVDNIEGGEKAQILMGATGTGKTYTMSQVISKVNKPTLVIAHNKTLAGQLYGEFKEFFPENAVEYFVSYYDYYQPEAYVPSSDTYIEKDSSVNDEIDKLRHSATSALLERNDVIVVASVSCIYGLGSPKEYADSVVSLRPGLEISRDKLLNDLVDIQFERNDIDFQRGRFRVRGDVVEIFPASRDEHAFRVEFFGDEIDRIREVEALTGQVLGEVDHLAIFPATHFVTNDDHMEVAIAKIQAELEEQLAVFEKEGKLLEAQRLKQRTEYDIEMLREMGYTNGVENYSRHMDGRSEGEPPYTLLDFFPDDFLIMIDESHMTIGQIKGMYNGDRSRKEMLVNYGFRLPSALDNRPLRREEFESHVHQIVYVSATPGDYENEQTETVIEQIIRPTGLLDPEVEVRPTMGQIDDLLGEINARVEKNERTFITTLTKKMAEDLTDYFKEMGIKVKYMHSDIKTLERTEIIRDLRLGVFDVLVGINLLREGIDVPEVSLVAILDADKEGFLRNERGLIQTIGRAARNSEGHVIMYADTVTQSMQRAIDETARRRKIQMAYNEEHGIVPQTIKKEIRDLIAVTKAVAKEEDKEVDITSLNKQERKELVKKLEKQMQEAVEVLDFELAAQIRDMMLEVKALD.

The region spanning 31–188 (DNIEGGEKAQ…NDLVDIQFER (158 aa)) is the Helicase ATP-binding domain. 44–51 (GATGTGKT) serves as a coordination point for ATP. The short motif at 97-120 (YYDYYQPEAYVPSSDTYIEKDSSV) is the Beta-hairpin element. Residues 435–601 (QIDDLLGEIN…TIKKEIRDLI (167 aa)) enclose the Helicase C-terminal domain. Residues 626 to 661 (KELVKKLEKQMQEAVEVLDFELAAQIRDMMLEVKAL) enclose the UVR domain.

The protein belongs to the UvrB family. In terms of assembly, forms a heterotetramer with UvrA during the search for lesions. Interacts with UvrC in an incision complex.

It localises to the cytoplasm. The UvrABC repair system catalyzes the recognition and processing of DNA lesions. A damage recognition complex composed of 2 UvrA and 2 UvrB subunits scans DNA for abnormalities. Upon binding of the UvrA(2)B(2) complex to a putative damaged site, the DNA wraps around one UvrB monomer. DNA wrap is dependent on ATP binding by UvrB and probably causes local melting of the DNA helix, facilitating insertion of UvrB beta-hairpin between the DNA strands. Then UvrB probes one DNA strand for the presence of a lesion. If a lesion is found the UvrA subunits dissociate and the UvrB-DNA preincision complex is formed. This complex is subsequently bound by UvrC and the second UvrB is released. If no lesion is found, the DNA wraps around the other UvrB subunit that will check the other stand for damage. The chain is UvrABC system protein B from Streptococcus pneumoniae (strain Hungary19A-6).